Here is a 342-residue protein sequence, read N- to C-terminus: Phenylalanine--tRNA ligase alpha subunit (342 aa).

Residue Glu260 coordinates Mg(2+).

Belongs to the class-II aminoacyl-tRNA synthetase family. Phe-tRNA synthetase alpha subunit type 1 subfamily. As to quaternary structure, tetramer of two alpha and two beta subunits. Mg(2+) is required as a cofactor.

It is found in the cytoplasm. The catalysed reaction is tRNA(Phe) + L-phenylalanine + ATP = L-phenylalanyl-tRNA(Phe) + AMP + diphosphate + H(+). The protein is Phenylalanine--tRNA ligase alpha subunit of Nocardia farcinica (strain IFM 10152).